A 1176-amino-acid polypeptide reads, in one-letter code: Serine/threonine-protein kinase pakF (1176 aa).

Composition is skewed to low complexity over residues 1–19 (MSNL…ESSS) and 32–52 (NLLN…SGSN). 2 disordered regions span residues 1–231 (MSNL…HESR) and 254–361 (LPST…KKTK). Residues 64–76 (QLPPNYTPPPPPH) show a composition bias toward pro residues. Residues 92 to 133 (LNNENSDNNNNNNNNNNNNNNNNNNNNNNNNNNNEQLARTES) are a coiled coil. 3 stretches are compositionally biased toward low complexity: residues 93 to 125 (NNEN…NNNN), 133 to 148 (SSVS…SNSG), and 156 to 172 (SSNI…ETYS). Positions 173-197 (MSPNQTLNSNIDSSEQQHQDLSSSV) are enriched in polar residues. Residues 198–226 (NNNNNNNNNNNNNNNNNNNNNNNNNNNNN) show a composition bias toward low complexity. The segment covering 254 to 289 (LPSTPTQQNVEIQTTNGGSSETSPNGLISPRPSNDQ) has biased composition (polar residues). Low complexity predominate over residues 316 to 353 (SLSSSTTTPSTTSSLTSSPSSSSLAISSPNTTAATTTN). The CRIB domain maps to 370–383 (ISVPYNVIHKMHVD). The Protein kinase domain occupies 394-646 (FILDEKLGDG…PIDLLCHPFL (253 aa)). Residues 400-408 (LGDGAYGSV) and lysine 423 each bind ATP. The Proton acceptor role is filled by aspartate 514. Disordered regions lie at residues 670–723 (IDDL…SDEL), 753–885 (QEEE…GNNL), 968–1083 (HTTS…TGRA), and 1112–1176 (NSNS…NIKK). Low complexity-rich tracts occupy residues 682–693 (SQSSSSSSPQSP) and 710–720 (SIISPIPSSPS). Acidic residues-rich tracts occupy residues 767-789 (DEQD…EDVD) and 813-844 (DQDD…DEEI). Residues 812-873 (SDQDDEEEDE…NKKKNKKNNL (62 aa)) are a coiled coil. Over residues 852-870 (VRKKKNKSTKKSNKKKNKK) the composition is skewed to basic residues. 2 stretches are compositionally biased toward polar residues: residues 873-884 (LSTIGKSGSGNN) and 968-985 (HTTS…ATNL). 3 stretches are compositionally biased toward low complexity: residues 991-1044 (SSSP…RPNS), 1051-1066 (NNSS…SSSS), and 1148-1176 (SSGS…NIKK).

The protein belongs to the protein kinase superfamily. STE Ser/Thr protein kinase family. STE20 subfamily. Mg(2+) is required as a cofactor.

The catalysed reaction is L-seryl-[protein] + ATP = O-phospho-L-seryl-[protein] + ADP + H(+). It carries out the reaction L-threonyl-[protein] + ATP = O-phospho-L-threonyl-[protein] + ADP + H(+). This chain is Serine/threonine-protein kinase pakF, found in Dictyostelium discoideum (Social amoeba).